The following is a 145-amino-acid chain: Hemoglobin subunit beta (145 aa).

In terms of domain architecture, Globin spans 1-145; the sequence is MLTAEEKAAV…VANALAHRYH (145 aa). Thr-11 bears the Phosphothreonine mark. N6-acetyllysine is present on Lys-58. His-62 lines the heme b pocket. Lys-81 is subject to N6-acetyllysine. Residue His-91 participates in heme b binding. Position 92 is an S-nitrosocysteine (Cys-92).

This sequence belongs to the globin family. Heterotetramer of two alpha chains and two beta chains. As to expression, red blood cells.

Involved in oxygen transport from the lung to the various peripheral tissues. The sequence is that of Hemoglobin subunit beta (HBB) from Alces alces alces (European moose).